Here is a 129-residue protein sequence, read N- to C-terminus: Glycine cleavage system H protein (129 aa).

Residues 24–106 form the Lipoyl-binding domain; sequence SYTVGITEHA…YGDGWFFRIM (83 aa). N6-lipoyllysine is present on Lys-65.

The protein belongs to the GcvH family. As to quaternary structure, the glycine cleavage system is composed of four proteins: P, T, L and H. It depends on (R)-lipoate as a cofactor.

The glycine cleavage system catalyzes the degradation of glycine. The H protein shuttles the methylamine group of glycine from the P protein to the T protein. The sequence is that of Glycine cleavage system H protein from Shewanella denitrificans (strain OS217 / ATCC BAA-1090 / DSM 15013).